We begin with the raw amino-acid sequence, 237 residues long: MAPRWKWKGAEAKALAEPVSKTVSELRSSLTQTEALGFLSSCNVLLSVESEEAELLDRCCFGRLVVGAEKDKRWIQLSFEEAFFLFYKLKCIKICLHGRSLENEVDLWRSMSSFKQDFAILYKAYSHLRSKNWIVRSGLQYGVDFVVYRHHPSLVHSEYAVLVQSIGGNDRLKVWSDIHCSVRLTGSVAKSLLVLYVNRKVNTEKMNLPLCLEDYTVEEQTIRRWSPELSREDETRT.

Catalysis depends on residues Tyr148, His156, and Lys190.

This sequence belongs to the tRNA-intron endonuclease family. In terms of assembly, tRNA splicing endonuclease is a heterotetramer composed of SEN2, SEN15, SEN34/LENG5 and SEN54.

Its subcellular location is the nucleus. The enzyme catalyses pretRNA = a 3'-half-tRNA molecule with a 5'-OH end + a 5'-half-tRNA molecule with a 2',3'-cyclic phosphate end + an intron with a 2',3'-cyclic phosphate and a 5'-hydroxyl terminus.. In terms of biological role, constitutes one of the two catalytic subunit of the tRNA-splicing endonuclease complex, a complex responsible for identification and cleavage of the splice sites in pre-tRNA. It cleaves pre-tRNA at the 5'- and 3'-splice sites to release the intron. The products are an intron and two tRNA half-molecules bearing 2',3'-cyclic phosphate and 5'-OH termini. There are no conserved sequences at the splice sites, but the intron is invariably located at the same site in the gene, placing the splice sites an invariant distance from the constant structural features of the tRNA body. Probably carries the active site for 5'-splice site cleavage. The sequence is that of tRNA-splicing endonuclease subunit Sen2-1 (SEN1) from Arabidopsis thaliana (Mouse-ear cress).